The primary structure comprises 621 residues: UvrABC system protein C (621 aa).

The 80-residue stretch at Ala21–Val100 folds into the GIY-YIG domain. The UVR domain occupies Asp210–Leu245.

It belongs to the UvrC family. Interacts with UvrB in an incision complex.

It is found in the cytoplasm. In terms of biological role, the UvrABC repair system catalyzes the recognition and processing of DNA lesions. UvrC both incises the 5' and 3' sides of the lesion. The N-terminal half is responsible for the 3' incision and the C-terminal half is responsible for the 5' incision. The protein is UvrABC system protein C of Synechococcus sp. (strain JA-3-3Ab) (Cyanobacteria bacterium Yellowstone A-Prime).